The following is a 116-amino-acid chain: Orphan antitoxin YagB (116 aa).

The protein belongs to the CbeA/YafW/YfjZ antitoxin family.

Functionally, putative antitoxin component of a type IV toxin-antitoxin (TA) system; its cognate toxin is unknown. This chain is Orphan antitoxin YagB (yagB), found in Escherichia coli (strain K12).